A 140-amino-acid chain; its full sequence is Sec-independent protein translocase protein TatB (140 aa).

The helical transmembrane segment at 1–21 threads the bilayer; it reads MFDIGFSELLLIAVVALVVLG. The interval 119–140 is disordered; sequence VHVTSPPPSTSTHGNNGQEKSQ. A compositionally biased stretch (polar residues) spans 128–140; it reads TSTHGNNGQEKSQ.

The protein belongs to the TatB family. In terms of assembly, the Tat system comprises two distinct complexes: a TatABC complex, containing multiple copies of TatA, TatB and TatC subunits, and a separate TatA complex, containing only TatA subunits. Substrates initially bind to the TatABC complex, which probably triggers association of the separate TatA complex to form the active translocon.

It localises to the cell inner membrane. Its function is as follows. Part of the twin-arginine translocation (Tat) system that transports large folded proteins containing a characteristic twin-arginine motif in their signal peptide across membranes. Together with TatC, TatB is part of a receptor directly interacting with Tat signal peptides. TatB may form an oligomeric binding site that transiently accommodates folded Tat precursor proteins before their translocation. This is Sec-independent protein translocase protein TatB from Xylella fastidiosa (strain 9a5c).